Reading from the N-terminus, the 82-residue chain is Protein WFDC11 (82 aa).

The signal sequence occupies residues 1 to 21 (MKPSWFPCLVFLCMLLLSALG).

It localises to the secreted. This is Protein WFDC11 (Wfdc11) from Mus musculus (Mouse).